We begin with the raw amino-acid sequence, 138 residues long: Ribulose bisphosphate carboxylase small subunit (138 aa).

It belongs to the RuBisCO small chain family. In terms of assembly, heterohexadecamer of 8 large and 8 small subunits.

Its subcellular location is the plastid. It localises to the chloroplast. RuBisCO catalyzes two reactions: the carboxylation of D-ribulose 1,5-bisphosphate, the primary event in carbon dioxide fixation, as well as the oxidative fragmentation of the pentose substrate in the photorespiration process. Both reactions occur simultaneously and in competition at the same active site. Although the small subunit is not catalytic it is essential for maximal activity. The chain is Ribulose bisphosphate carboxylase small subunit from Porphyridium aerugineum (Red microalga).